A 1187-amino-acid polypeptide reads, in one-letter code: DNA-directed RNA polymerase subunit beta (1187 aa).

The disordered stretch occupies residues 1150-1187; the sequence is KDEDDDPASSADDLGFNIGARPDAAAKEDQKAEEPEYQ. Over residues 1173-1187 the composition is skewed to basic and acidic residues; the sequence is AAAKEDQKAEEPEYQ.

Belongs to the RNA polymerase beta chain family. In terms of assembly, the RNAP catalytic core consists of 2 alpha, 1 beta, 1 beta' and 1 omega subunit. When a sigma factor is associated with the core the holoenzyme is formed, which can initiate transcription.

It catalyses the reaction RNA(n) + a ribonucleoside 5'-triphosphate = RNA(n+1) + diphosphate. Functionally, DNA-dependent RNA polymerase catalyzes the transcription of DNA into RNA using the four ribonucleoside triphosphates as substrates. The chain is DNA-directed RNA polymerase subunit beta from Bifidobacterium longum subsp. infantis (strain ATCC 15697 / DSM 20088 / JCM 1222 / NCTC 11817 / S12).